Here is a 77-residue protein sequence, read N- to C-terminus: uncharacterized protein (77 aa).

This is an uncharacterized protein from Haemophilus phage HP1 (strain HP1c1) (Bacteriophage HP1).